The primary structure comprises 80 residues: Acyl carrier protein (80 aa).

The Carrier domain maps to 4-79 (NSIEEKVRSI…DVVAYIEKVQ (76 aa)). S39 bears the O-(pantetheine 4'-phosphoryl)serine mark.

The protein belongs to the acyl carrier protein (ACP) family. Post-translationally, 4'-phosphopantetheine is transferred from CoA to a specific serine of apo-ACP by AcpS. This modification is essential for activity because fatty acids are bound in thioester linkage to the sulfhydryl of the prosthetic group.

Its subcellular location is the cytoplasm. Its pathway is lipid metabolism; fatty acid biosynthesis. In terms of biological role, carrier of the growing fatty acid chain in fatty acid biosynthesis. The polypeptide is Acyl carrier protein (Akkermansia muciniphila (strain ATCC BAA-835 / DSM 22959 / JCM 33894 / BCRC 81048 / CCUG 64013 / CIP 107961 / Muc)).